The sequence spans 317 residues: Carbonic anhydrase 6 (317 aa).

The N-terminal stretch at 1–17 (MRALVSVVSLFFLGIQA) is a signal peptide. Residues 19 to 277 (SDWSYSGDDG…NNHRVVEANF (259 aa)) enclose the Alpha-carbonic anhydrase domain. C41 and C223 are joined by a disulfide. The Proton donor/acceptor role is filled by H84. Zn(2+) contacts are provided by H110, H112, and H137. A substrate-binding site is contributed by 219-220 (TT). Residue N255 is glycosylated (N-linked (GlcNAc...) asparagine).

This sequence belongs to the alpha-carbonic anhydrase family. Zn(2+) serves as cofactor. In terms of tissue distribution, major constituent of saliva.

The protein resides in the secreted. It carries out the reaction hydrogencarbonate + H(+) = CO2 + H2O. In terms of biological role, reversible hydration of carbon dioxide. Its role in saliva is unknown. In Mus musculus (Mouse), this protein is Carbonic anhydrase 6 (Ca6).